We begin with the raw amino-acid sequence, 232 residues long: Ribose-5-phosphate isomerase A (232 aa).

Substrate is bound by residues 34–37 (TGST), 89–92 (DGAD), and 102–105 (KGGG). Catalysis depends on E111, which acts as the Proton acceptor. K129 contacts substrate.

The protein belongs to the ribose 5-phosphate isomerase family. As to quaternary structure, homodimer.

It catalyses the reaction aldehydo-D-ribose 5-phosphate = D-ribulose 5-phosphate. Its pathway is carbohydrate degradation; pentose phosphate pathway; D-ribose 5-phosphate from D-ribulose 5-phosphate (non-oxidative stage): step 1/1. In terms of biological role, catalyzes the reversible conversion of ribose-5-phosphate to ribulose 5-phosphate. The protein is Ribose-5-phosphate isomerase A of Protochlamydia amoebophila (strain UWE25).